The chain runs to 165 residues: Regulator of ribonuclease activity A (165 aa).

It belongs to the RraA family. Homotrimer. Binds to both RNA-binding sites in the C-terminal region of Rne and to RhlB.

It is found in the cytoplasm. Functionally, globally modulates RNA abundance by binding to RNase E (Rne) and regulating its endonucleolytic activity. Can modulate Rne action in a substrate-dependent manner by altering the composition of the degradosome. Modulates RNA-binding and helicase activities of the degradosome. This is Regulator of ribonuclease activity A from Pseudoalteromonas translucida (strain TAC 125).